The following is a 495-amino-acid chain: Glycerol kinase (495 aa).

Residue threonine 12 coordinates ADP. Residues threonine 12, threonine 13, and serine 14 each coordinate ATP. Position 12 (threonine 12) interacts with sn-glycerol 3-phosphate. Position 16 (arginine 16) interacts with ADP. Residues arginine 82, glutamate 83, tyrosine 134, and aspartate 243 each contribute to the sn-glycerol 3-phosphate site. Arginine 82, glutamate 83, tyrosine 134, aspartate 243, and glutamine 244 together coordinate glycerol. ADP is bound by residues threonine 265 and glycine 308. The ATP site is built by threonine 265, glycine 308, glutamine 312, and glycine 409. Positions 409 and 413 each coordinate ADP.

Belongs to the FGGY kinase family.

It catalyses the reaction glycerol + ATP = sn-glycerol 3-phosphate + ADP + H(+). It functions in the pathway polyol metabolism; glycerol degradation via glycerol kinase pathway; sn-glycerol 3-phosphate from glycerol: step 1/1. Its activity is regulated as follows. Inhibited by fructose 1,6-bisphosphate (FBP). Its function is as follows. Key enzyme in the regulation of glycerol uptake and metabolism. Catalyzes the phosphorylation of glycerol to yield sn-glycerol 3-phosphate. In Ectopseudomonas mendocina (strain ymp) (Pseudomonas mendocina), this protein is Glycerol kinase.